A 303-amino-acid polypeptide reads, in one-letter code: Acetylglutamate kinase (303 aa).

Substrate contacts are provided by residues 75-76 (GG), arginine 97, and asparagine 194.

It belongs to the acetylglutamate kinase family. ArgB subfamily.

It is found in the cytoplasm. The catalysed reaction is N-acetyl-L-glutamate + ATP = N-acetyl-L-glutamyl 5-phosphate + ADP. Its pathway is amino-acid biosynthesis; L-arginine biosynthesis; N(2)-acetyl-L-ornithine from L-glutamate: step 2/4. Its function is as follows. Catalyzes the ATP-dependent phosphorylation of N-acetyl-L-glutamate. This is Acetylglutamate kinase from Gloeobacter violaceus (strain ATCC 29082 / PCC 7421).